We begin with the raw amino-acid sequence, 229 residues long: Protein-lysine N-methyltransferase EFM4 (229 aa).

This sequence belongs to the class I-like SAM-binding methyltransferase superfamily. EFM4 family.

It localises to the cytoplasm. It catalyses the reaction L-lysyl-[protein] + S-adenosyl-L-methionine = N(6)-methyl-L-lysyl-[protein] + S-adenosyl-L-homocysteine + H(+). The catalysed reaction is N(6)-methyl-L-lysyl-[protein] + S-adenosyl-L-methionine = N(6),N(6)-dimethyl-L-lysyl-[protein] + S-adenosyl-L-homocysteine + H(+). Its function is as follows. S-adenosyl-L-methionine-dependent protein-lysine N-methyltransferase that mono- and dimethylates elongation factor 1-alpha (TEF1 and TEF2) at 'Lys-316'. May play a role in intracellular transport. The polypeptide is Protein-lysine N-methyltransferase EFM4 (Saccharomyces cerevisiae (strain ATCC 204508 / S288c) (Baker's yeast)).